A 608-amino-acid chain; its full sequence is Cytoplasmic dynein 1 intermediate chain 1 (608 aa).

Basic and acidic residues-rich tracts occupy residues 1 to 13 (MSDK…ELER) and 20 to 60 (QIRE…RETE). The segment at 1 to 106 (MSDKSDLKAE…SGDLGPLTRR (106 aa)) is disordered. Position 2 is an N-acetylserine (Ser2). A Phosphoserine modification is found at Ser50. The span at 70 to 79 (PEPPLVPTPM) shows a compositional bias: pro residues. Low complexity predominate over residues 80–90 (SPSSKSVSTPS). Ser83 carries the post-translational modification Phosphoserine. Thr88 bears the Phosphothreonine mark. Ser90, Ser94, and Ser97 each carry phosphoserine. The interaction with DYNLT1 stretch occupies residues 110-126 (KLGVSKITQVDFLPREV). The tract at residues 132 to 184 (ETQTPLATHQSEEDEDDEEMVEPKGDQDSEQENEDKKQEVKEAPPRELTEEEK) is disordered. A Phosphothreonine modification is found at Thr139. Ser142 and Ser160 each carry phosphoserine. Over residues 165–184 (EDKKQEVKEAPPRELTEEEK) the composition is skewed to basic and acidic residues. WD repeat units follow at residues 248–297 (SKHR…TTPE), 301–341 (HCQS…RTPV), 350–391 (AHTH…TPQE), 400–440 (SKPV…AGIG), 445–490 (GHQG…PLYS), 493–533 (DNAD…EVPT), and 539–578 (EGAS…VPHN). The residue at position 598 (Ser598) is a Phosphoserine.

This sequence belongs to the dynein intermediate chain family. In terms of assembly, homodimer. The cytoplasmic dynein 1 complex consists of two catalytic heavy chains (HCs) and a number of non-catalytic subunits presented by intermediate chains (ICs), light intermediate chains (LICs) and light chains (LCs); the composition seems to vary in respect to the IC, LIC and LC composition. The heavy chain homodimer serves as a scaffold for the probable homodimeric assembly of the respective non-catalytic subunits. The ICs and LICs bind directly to the HC dimer and the LCs assemble on the IC dimer. Interacts with DYNC1H1. Interacts with DYNLT1 and DYNLT3. Interacts with DCTN1. Interacts with MCRS1; the interaction is required for the proper distribution of centriolar satellites.

The protein resides in the cytoplasm. The protein localises to the chromosome. Its subcellular location is the centromere. It is found in the kinetochore. It localises to the cytoskeleton. The protein resides in the spindle pole. In terms of biological role, acts as one of several non-catalytic accessory components of the cytoplasmic dynein 1 complex that are thought to be involved in linking dynein to cargos and to adapter proteins that regulate dynein function. Cytoplasmic dynein 1 acts as a motor for the intracellular retrograde motility of vesicles and organelles along microtubules. The intermediate chains mediate the binding of dynein to dynactin via its 150 kDa component (p150-glued) DCTN1. May play a role in mediating the interaction of cytoplasmic dynein with membranous organelles and kinetochores. The chain is Cytoplasmic dynein 1 intermediate chain 1 (DYNC1I1) from Bos taurus (Bovine).